Reading from the N-terminus, the 283-residue chain is Diaminopimelate epimerase (283 aa).

Substrate is bound by residues asparagine 14, glutamine 47, and asparagine 67. Residue cysteine 76 is the Proton donor of the active site. Residues 77–78 (GN), asparagine 164, asparagine 197, and 215–216 (ER) contribute to the substrate site. Cysteine 224 functions as the Proton acceptor in the catalytic mechanism. 225 to 226 (GT) is a substrate binding site.

This sequence belongs to the diaminopimelate epimerase family. As to quaternary structure, homodimer.

It localises to the cytoplasm. It catalyses the reaction (2S,6S)-2,6-diaminopimelate = meso-2,6-diaminopimelate. The protein operates within amino-acid biosynthesis; L-lysine biosynthesis via DAP pathway; DL-2,6-diaminopimelate from LL-2,6-diaminopimelate: step 1/1. Catalyzes the stereoinversion of LL-2,6-diaminopimelate (L,L-DAP) to meso-diaminopimelate (meso-DAP), a precursor of L-lysine and an essential component of the bacterial peptidoglycan. This is Diaminopimelate epimerase from Neisseria meningitidis serogroup A / serotype 4A (strain DSM 15465 / Z2491).